The sequence spans 262 residues: Glutamate racemase (262 aa).

Residues 7-8 and 39-40 contribute to the substrate site; these read DS and YG. Residue cysteine 70 is the Proton donor/acceptor of the active site. 71–72 provides a ligand contact to substrate; it reads NT. The Proton donor/acceptor role is filled by cysteine 182. Residue 183–184 coordinates substrate; it reads TH.

It belongs to the aspartate/glutamate racemases family.

The catalysed reaction is L-glutamate = D-glutamate. The protein operates within cell wall biogenesis; peptidoglycan biosynthesis. In terms of biological role, provides the (R)-glutamate required for cell wall biosynthesis. This chain is Glutamate racemase, found in Campylobacter concisus (strain 13826).